The sequence spans 652 residues: Sodium-dependent phosphate transporter 1-A (652 aa).

Over 1–25 (MESTTLASLAAVSVLAAGAQTDMSD) the chain is Cytoplasmic. A helical transmembrane segment spans residues 26-46 (VLWLLILGFVIAFILAFSVGA). At 47–66 (NDVANSFGTAVGSGVVTLRQ) the chain is on the extracellular side. The chain crosses the membrane as a helical span at residues 67-87 (ACILATIFETVGAMLLGAKVS). Over 88–104 (ETIRSGIIDVHMYNGSE) the chain is Cytoplasmic. Residues 105-125 (AVLMAGSISAMFGSAVWQLAA) form a helical membrane-spanning segment. Topologically, residues 126–162 (SFLKLPISGTHCIVGATIGFSMVARGHQGVKWLELLR) are extracellular. Residues 163-183 (IVASWFLSPLLSGIMSAVLFY) form a helical membrane-spanning segment. Topologically, residues 184–201 (FVRKFILNKDDPVPNGLR) are cytoplasmic. Residues 202-222 (ALPVFYAVTMGINLFSIMFTG) form a helical membrane-spanning segment. Residues 223-234 (APMLGFDRIPWW) are Extracellular-facing. The helical transmembrane segment at 235 to 255 (GTLLISLGCAILTALVVWFIV) threads the bilayer. The Cytoplasmic segment spans residues 256 to 482 (CPRLKKKMQS…IDELEIDKPE (227 aa)). The segment at 278-308 (TQLVEKKPSSNGLMDHHPGPPRNYSPVPQTP) is disordered. Residues 281 to 295 (VEKKPSSNGLMDHHP) are compositionally biased toward basic and acidic residues. Over residues 297-308 (PPRNYSPVPQTP) the composition is skewed to pro residues. The chain crosses the membrane as a helical span at residues 483 to 503 (VSTLFQFLQILTACFGSFAHG). Topologically, residues 504 to 531 (GNDVSNAIGPLVALWLIYDSASVAPSAP) are extracellular. Residues 532–552 (TPIWLLLYGGVGICTGLWIWG) form a helical membrane-spanning segment. Residues 553-571 (RRVIQTMGKDLTPITPSSG) are Cytoplasmic-facing. Residues 572-592 (FSIELASAITVVVASNIGLPV) traverse the membrane as a helical segment. Residues 593-621 (STTHCKVGSVVSVGWLRSRKAVDWHLFRN) are Extracellular-facing. A helical transmembrane segment spans residues 622 to 642 (IFIAWFVTVPISGLISAAIMA). The Cytoplasmic portion of the chain corresponds to 643–652 (LFYYVILPLT).

The protein belongs to the inorganic phosphate transporter (PiT) (TC 2.A.20) family.

The protein localises to the membrane. Functionally, sodium-phosphate symporter which plays a fundamental housekeeping role in phosphate transport. This is Sodium-dependent phosphate transporter 1-A (slc20a1a) from Danio rerio (Zebrafish).